The chain runs to 172 residues: MSLPNPADLIRQMAVDLRAHLARRAITEPRYIGIRTGGVWVAQALQEAMGDSSPMGTLDVSFYRDDFSQNGLHPQVRPSELPFEVEGQHLVLVDDVLMSGRTIRAALNELFDYGRPASVTLVCLLDLDAGELPIRPNVLGATLSLAAHERVKLTGPAPLALERQDLASRSAL.

Residues 36–37 (TG), R77, 94–102 (DDVLMSGRT), and V151 contribute to the substrate site. Residues 90–102 (LVLVDDVLMSGRT) carry the PRPP-binding motif.

It belongs to the purine/pyrimidine phosphoribosyltransferase family. PyrR subfamily.

The catalysed reaction is UMP + diphosphate = 5-phospho-alpha-D-ribose 1-diphosphate + uracil. Functionally, regulates the transcription of the pyrimidine nucleotide (pyr) operon in response to exogenous pyrimidines. Also displays a weak uracil phosphoribosyltransferase activity which is not physiologically significant. This chain is Bifunctional protein PyrR, found in Pseudomonas putida (Arthrobacter siderocapsulatus).